Reading from the N-terminus, the 872-residue chain is DNA mismatch repair protein MutS (872 aa).

Residue 622–629 (GPNMAGKS) participates in ATP binding.

The protein belongs to the DNA mismatch repair MutS family.

In terms of biological role, this protein is involved in the repair of mismatches in DNA. It is possible that it carries out the mismatch recognition step. This protein has a weak ATPase activity. The polypeptide is DNA mismatch repair protein MutS (Geobacter metallireducens (strain ATCC 53774 / DSM 7210 / GS-15)).